Consider the following 34-residue polypeptide: Photosystem II reaction center protein M (34 aa).

A helical membrane pass occupies residues 7–27 (GFVASLLFILVPAIFLIVLYI).

The protein belongs to the PsbM family. As to quaternary structure, PSII is composed of 1 copy each of membrane proteins PsbA, PsbB, PsbC, PsbD, PsbE, PsbF, PsbH, PsbI, PsbJ, PsbK, PsbL, PsbM, PsbT, PsbX, PsbY, PsbZ, Psb30/Ycf12, peripheral proteins PsbO, CyanoQ (PsbQ), PsbU, PsbV and a large number of cofactors. It forms dimeric complexes.

It is found in the cellular thylakoid membrane. In terms of biological role, one of the components of the core complex of photosystem II (PSII). PSII is a light-driven water:plastoquinone oxidoreductase that uses light energy to abstract electrons from H(2)O, generating O(2) and a proton gradient subsequently used for ATP formation. It consists of a core antenna complex that captures photons, and an electron transfer chain that converts photonic excitation into a charge separation. This subunit is found at the monomer-monomer interface. This chain is Photosystem II reaction center protein M, found in Parasynechococcus marenigrum (strain WH8102).